Here is a 122-residue protein sequence, read N- to C-terminus: MIQEQTMLTVADNSGARRVMCIKVLGGSCRRYASIGDVIKITIKEAIPRGKVKKGDVLKAVIVRTKKGVRRPDGSIVRFDGNACVLLNNNEQPIGTRVFGPITRELRIEKFMKIISLAPEVL.

It belongs to the universal ribosomal protein uL14 family. Part of the 50S ribosomal subunit. Forms a cluster with proteins L3 and L19. In the 70S ribosome, L14 and L19 interact and together make contacts with the 16S rRNA in bridges B5 and B8.

In terms of biological role, binds to 23S rRNA. Forms part of two intersubunit bridges in the 70S ribosome. This is Large ribosomal subunit protein uL14 from Baumannia cicadellinicola subsp. Homalodisca coagulata.